We begin with the raw amino-acid sequence, 106 residues long: Glutaredoxin-1 (106 aa).

A2 carries the N-acetylalanine modification. The Glutaredoxin domain maps to 3–106 (QEFVNCKIQP…TRLKQIGALQ (104 aa)). At K9 the chain carries N6-succinyllysine. 2 cysteine pairs are disulfide-bonded: C23–C26 and C79–C83.

Belongs to the glutaredoxin family.

It is found in the cytoplasm. Functionally, has a glutathione-disulfide oxidoreductase activity in the presence of NADPH and glutathione reductase. Reduces low molecular weight disulfides and proteins. The polypeptide is Glutaredoxin-1 (GLRX) (Homo sapiens (Human)).